The primary structure comprises 352 residues: MSVFAGYAACTLGAVSMLLCVSLVPQVYQQVSMLRDELTTEMEAWRLESDQIYMDMQKFGRVRRQAGGYGGYGGYGSGPSGPSGPSGPHGGFPGGPQGHFPGNTGSSNTPTLPGVIGVPPSVTGHPGGSPINPDGSPSAGPGDKCNCNTENSCPAGPAGPKGTPGHDGPDGIPGVPGVDGEDADDAKAQTQQYDGCFTCPAGPQGPPGSQGKPGARGMRGARGQAAMPGRDGSPGMPGSLGPIGPPGAAGEEGPTGEPGADVEHQIGLPGAKGTPGAPGESGDQGEQGDRGATGIAGPPGERGPQGEKGDDGPNGAAGSPGEEGEPGQDAQYCPCPQRNTNAAVSGNQGYRN.

A signal peptide spans 1 to 29; sequence MSVFAGYAACTLGAVSMLLCVSLVPQVYQ. The interval 61-64 is furin-like endopeptidase recognition region; that stretch reads RVRR. Disordered stretches follow at residues 73–143 and 156–352; these read GGYG…GPGD and GPAG…GYRN. The span at 87–97 shows a compositional bias: gly residues; that stretch reads GPHGGFPGGPQ. Triple-helical region stretches follow at residues 156–182, 202–264, 267–290, and 294–329; these read GPAGPKGTPGHDGPDGIPGVPGVDGED, GPQG…DVEH, GLPGAKGTPGAPGESGDQGEQGDR, and GIAGPPGERGPQGEKGDDGPNGAAGSPGEEGEPGQD. Residues 202–259 enclose the Collagen-like domain; that stretch reads GPQGPPGSQGKPGARGMRGARGQAAMPGRDGSPGMPGSLGPIGPPGAAGEEGPTGEPG. Low complexity predominate over residues 207-259; it reads PGSQGKPGARGMRGARGQAAMPGRDGSPGMPGSLGPIGPPGAAGEEGPTGEPG. A compositionally biased stretch (polar residues) spans 337–352; that stretch reads QRNTNAAVSGNQGYRN.

This sequence belongs to the cuticular collagen family. In terms of assembly, collagen polypeptide chains are complexed within the cuticle by disulfide bonds and other types of covalent cross-links.

The protein resides in the secreted. The protein localises to the extracellular space. Secreted collagen that forms part of the nematode cuticle, which functions as an exoskeleton and a barrier to protect the worm from its environment. Secretion and subsequent incorporation into the cuticle is likely mediated by bli-4, which probably cleaves at the N-terminal consensus furin cleavage site. This Caenorhabditis elegans protein is Cuticle collagen dpy-17.